Consider the following 418-residue polypeptide: CinA-like protein (418 aa).

The protein belongs to the CinA family.

This Leptospira interrogans serogroup Icterohaemorrhagiae serovar copenhageni (strain Fiocruz L1-130) protein is CinA-like protein.